Here is a 320-residue protein sequence, read N- to C-terminus: Putative FBD-associated F-box protein At3g60710 (320 aa).

An F-box domain is found at E2–I48. One can recognise an FBD domain in the interval M212–L268.

The protein is Putative FBD-associated F-box protein At3g60710 of Arabidopsis thaliana (Mouse-ear cress).